The primary structure comprises 407 residues: MDNVLPMDSDLFPNISTNTSESNQFVQPTWQIVLWAAAYTVIVVTSVVGNVVVIWIILAHKRMRTVTNYFLVNLAFAEACMAAFNTVVNFTYAVHNVWYYGLFYCKFHNFFPIAALFASIYSMTAVAFDRYMAIIHPLQPRLSATATKVVIFVIWVLALLLAFPQGYYSTTETMPSRVVCMIEWPEHPNRTYEKAYHICVTVLIYFLPLLVIGYAYTVVGITLWASEIPGDSSDRYHEQVSAKRKVVKMMIVVVCTFAICWLPFHVFFLLPYINPDLYLKKFIQQVYLASMWLAMSSTMYNPIIYCCLNDRFRLGFKHAFRCCPFISAGDYEGLEMKSTRYLQTQSSVYKVSRLETTISTVVGAHEEEPEEGPKATPSSLDLTSNGSSRSNSKTMTESSSFYSNMLA.

Residues 1–31 (MDNVLPMDSDLFPNISTNTSESNQFVQPTWQ) lie on the Extracellular side of the membrane. Asn-14 and Asn-18 each carry an N-linked (GlcNAc...) asparagine glycan. Residues 32-54 (IVLWAAAYTVIVVTSVVGNVVVI) form a helical membrane-spanning segment. Residues 55–64 (WIILAHKRMR) are Cytoplasmic-facing. Residues 65-86 (TVTNYFLVNLAFAEACMAAFNT) form a helical membrane-spanning segment. Residues 87 to 106 (VVNFTYAVHNVWYYGLFYCK) are Extracellular-facing. Cys-105 and Cys-180 form a disulfide bridge. A helical transmembrane segment spans residues 107–128 (FHNFFPIAALFASIYSMTAVAF). The Cytoplasmic segment spans residues 129-148 (DRYMAIIHPLQPRLSATATK). The helical transmembrane segment at 149–169 (VVIFVIWVLALLLAFPQGYYS) threads the bilayer. Residues 170–194 (TTETMPSRVVCMIEWPEHPNRTYEK) are Extracellular-facing. A helical membrane pass occupies residues 195–219 (AYHICVTVLIYFLPLLVIGYAYTVV). Topologically, residues 220–248 (GITLWASEIPGDSSDRYHEQVSAKRKVVK) are cytoplasmic. The helical transmembrane segment at 249–270 (MMIVVVCTFAICWLPFHVFFLL) threads the bilayer. The Extracellular segment spans residues 271–283 (PYINPDLYLKKFI). A helical membrane pass occupies residues 284-308 (QQVYLASMWLAMSSTMYNPIIYCCL). The Cytoplasmic portion of the chain corresponds to 309–407 (NDRFRLGFKH…SSSFYSNMLA (99 aa)). Cys-322 carries S-palmitoyl cysteine lipidation. The disordered stretch occupies residues 362–407 (VGAHEEEPEEGPKATPSSLDLTSNGSSRSNSKTMTESSSFYSNMLA). Over residues 376–407 (TPSSLDLTSNGSSRSNSKTMTESSSFYSNMLA) the composition is skewed to polar residues.

This sequence belongs to the G-protein coupled receptor 1 family. As to quaternary structure, interacts with ARRB1.

The protein localises to the cell membrane. Functionally, this is a receptor for the tachykinin neuropeptide substance P. It is probably associated with G proteins that activate a phosphatidylinositol-calcium second messenger system. The rank order of affinity of this receptor to tachykinins is: substance P &gt; substance K &gt; neuromedin-K. The chain is Substance-P receptor (Tacr1) from Rattus norvegicus (Rat).